A 574-amino-acid chain; its full sequence is E3 ubiquitin-protein ligase NEURL1 (574 aa).

The segment covering 1 to 18 has biased composition (polar residues); sequence MGNNFSSVSSLQRGNPSR. The disordered stretch occupies residues 1–53; sequence MGNNFSSVSSLQRGNPSRASRGHPQNLKDSIGGSFPVPSHRCHHKQKHCPPTL. The N-myristoyl glycine moiety is linked to residue Gly-2. 2 NHR domains span residues 61–217 and 292–447; these read TPLL…QLLD and GDLR…RILG. The RING-type zinc finger occupies 520–560; the sequence is ECTICYEHAVDTVIYTCGHMCLCYSCGLRLKKALHACCPIC.

As to quaternary structure, interacts with CPEB3 (via N-terminal domain); the interaction increases CPEB3 ubiquitination. Interacts with DLL1. Myristoylation is a determinant of membrane targeting. As to expression, expressed in CA1 pyramidal neurons (at protein level). Expressed throughout the adult forebrain, including the cerebral cortex, amygdala, striatum, and CA1 area of the hippocampus. Expressed in sensory neurons of the olfactory epithelium, the vomeronasal organ, mammary gland and skeletal muscle.

It localises to the cytoplasm. Its subcellular location is the perinuclear region. The protein localises to the cell membrane. It is found in the perikaryon. The protein resides in the cell projection. It localises to the dendrite. Its subcellular location is the postsynaptic density. It catalyses the reaction S-ubiquitinyl-[E2 ubiquitin-conjugating enzyme]-L-cysteine + [acceptor protein]-L-lysine = [E2 ubiquitin-conjugating enzyme]-L-cysteine + N(6)-ubiquitinyl-[acceptor protein]-L-lysine.. It functions in the pathway protein modification; protein ubiquitination. In terms of biological role, plays a role in hippocampal-dependent synaptic plasticity, learning and memory. Involved in the formation of spines and functional synaptic contacts by modulating the translational activity of the cytoplasmic polyadenylation element-binding protein CPEB3. Promotes ubiquitination of CPEB3, and hence induces CPEB3-dependent mRNA translation activation of glutamate receptor GRIA1 and GRIA2. Can function as an E3 ubiquitin-protein ligase to activate monoubiquitination of JAG1 (in vitro), thereby regulating the Notch pathway. Acts as a tumor suppressor; inhibits malignant cell transformation of medulloblastoma (MB) cells by inhibiting the Notch signaling pathway. The sequence is that of E3 ubiquitin-protein ligase NEURL1 (Neurl1) from Mus musculus (Mouse).